We begin with the raw amino-acid sequence, 1485 residues long: Chromosome partition protein MukB (1485 aa).

Position 34–41 (34–41) interacts with ATP; it reads GGNGAGKS. Coiled-coil stretches lie at residues 311–480 and 519–665; these read EMAR…EAYR and GARL…RLSQ. A flexible hinge region spans residues 666 to 783; the sequence is PGGAEDARLI…SLPLFGRAAR (118 aa). Coiled-coil stretches lie at residues 832–1115 and 1209–1265; these read NDPE…QAKA and IDAI…LQSV.

This sequence belongs to the SMC family. MukB subfamily. In terms of assembly, homodimerization via its hinge domain. Binds to DNA via its C-terminal region. Interacts, and probably forms a ternary complex, with MukE and MukF via its C-terminal region. The complex formation is stimulated by calcium or magnesium. Interacts with tubulin-related protein FtsZ.

Its subcellular location is the cytoplasm. The protein resides in the nucleoid. Functionally, plays a central role in chromosome condensation, segregation and cell cycle progression. Functions as a homodimer, which is essential for chromosome partition. Involved in negative DNA supercoiling in vivo, and by this means organize and compact chromosomes. May achieve or facilitate chromosome segregation by condensation DNA from both sides of a centrally located replisome during cell division. The chain is Chromosome partition protein MukB from Edwardsiella ictaluri (strain 93-146).